Reading from the N-terminus, the 714-residue chain is Polyribonucleotide nucleotidyltransferase (714 aa).

The Mg(2+) site is built by D489 and D495. A KH domain is found at 556–615; that stretch reads PKIDTIKIDVDKIKVVIGKGGETIDKIIAETGVKIDIDEEGNVSIYSSDQDAINRAKEII. Residues 625 to 693 form the S1 motif domain; sequence GEVYHAKVVR…DKGRIDASMK (69 aa). Residues 691–714 form a disordered region; that stretch reads SMKALVPRPPKPEKSEAKKEGKHD. Basic and acidic residues predominate over residues 700-714; the sequence is PKPEKSEAKKEGKHD.

The protein belongs to the polyribonucleotide nucleotidyltransferase family. Mg(2+) serves as cofactor.

The protein resides in the cytoplasm. The enzyme catalyses RNA(n+1) + phosphate = RNA(n) + a ribonucleoside 5'-diphosphate. In terms of biological role, involved in mRNA degradation. Catalyzes the phosphorolysis of single-stranded polyribonucleotides processively in the 3'- to 5'-direction. This chain is Polyribonucleotide nucleotidyltransferase, found in Streptococcus equi subsp. equi (strain 4047).